Reading from the N-terminus, the 240-residue chain is Protein unc-119 homolog A (240 aa).

Over residues 1 to 12 (MKVKKGGGGTGS) the composition is skewed to gly residues. The segment at 1–62 (MKVKKGGGGT…PLQGKQPIGP (62 aa)) is disordered. 3 positions are modified to phosphoserine; by CK2: serine 37, serine 39, and serine 41. Tyrosine 131 contacts tetradecanoate.

Belongs to the PDE6D/unc-119 family. In terms of assembly, may interact with GTP-bound ARL1. Interacts with ARL2 and ARL3 (GTP-bound forms); this promotes the release of myristoylated cargo proteins. Found in a complex with ARL3, RP2 and UNC119; RP2 induces hydrolysis of GTP ARL3 in the complex, leading to the release of UNC119. Interacts with NPHP3 (when myristoylated). Interacts with CYS1 (when myristoylated). Interacts with MACIR; interaction only takes place when UNC119 is not liganded with myristoylated proteins. Interacts with CABP4; in the absence of calcium. Interacts with DNM1; leading to a decrease of DNM1 GTPase activity. Interacts with LCK; this interaction plays a crucial role in activation of LCK. Interacts with FYN. Interacts with RAB11A; in a cell cycle-dependent manner. Interacts with LYN (via SH2 and SH3 domains); leading to LYN activation. Found in a complex with ABL1, ABL2, CRK and UNC119; leading to the inhibition of CRK phosphorylation by ABL kinases. Interacts with CD44. Interacts with KLHL18 (via kelch repeats). Interacts with PPP3CA, PPP3CB and PPP3CC. Interacts with USP48; this interaction promotes UNC119 stability. In terms of processing, phosphorylation suppresses its interaction with KLHL18 and down-regulates its KLHL18-mediated degradation. Phosphorylated more under light conditions than dark conditions. Dephosphorylated by calcineurin. Localized in photoreceptor synapses in the outer plexiform layer of the retina.

The protein resides in the cytoplasm. It is found in the cytoskeleton. The protein localises to the microtubule organizing center. Its subcellular location is the centrosome. It localises to the spindle. The protein resides in the spindle pole. In terms of biological role, involved in synaptic functions in photoreceptor cells, the signal transduction in immune cells as a Src family kinase activator, endosome recycling, the uptake of bacteria and endocytosis, protein trafficking in sensory neurons and as lipid-binding chaperone with specificity for a diverse subset of myristoylated proteins. Specifically binds the myristoyl moiety of a subset of N-terminally myristoylated proteins and is required for their localization. Binds myristoylated GNAT1 and is required for G-protein localization and trafficking in sensory neurons. Probably plays a role in trafficking proteins in photoreceptor cells. Plays important roles in mediating Src family kinase signals for the completion of cytokinesis via RAB11A. This Mus musculus (Mouse) protein is Protein unc-119 homolog A (Unc119).